Here is a 504-residue protein sequence, read N- to C-terminus: Beta-glucosidase 24 (504 aa).

A signal peptide spans 1–18 (MELLWLLLLLLMASSTSS). An a beta-D-glucoside-binding site is contributed by Gln-47. N-linked (GlcNAc...) asparagine glycosylation occurs at Asn-75. Residues His-151 and 196-197 (NE) contribute to the a beta-D-glucoside site. Glu-197 acts as the Proton donor in catalysis. Cys-216 and Cys-224 are disulfide-bonded. Residue Asn-329 is glycosylated (N-linked (GlcNAc...) asparagine). Tyr-340 provides a ligand contact to a beta-D-glucoside. Asn-371 is a glycosylation site (N-linked (GlcNAc...) asparagine). An a beta-D-glucoside-binding site is contributed by Glu-411. The active-site Nucleophile is the Glu-411. The N-linked (GlcNAc...) asparagine glycan is linked to Asn-421. A beta-D-glucoside contacts are provided by residues Trp-460, 467–468 (EW), and Phe-476.

It belongs to the glycosyl hydrolase 1 family.

The catalysed reaction is Hydrolysis of terminal, non-reducing beta-D-glucosyl residues with release of beta-D-glucose.. The polypeptide is Beta-glucosidase 24 (BGLU24) (Oryza sativa subsp. japonica (Rice)).